Consider the following 333-residue polypeptide: HTH-type transcriptional regulator pepR1 (333 aa).

An HTH lacI-type domain is found at 6–60 (VTIYDVAREAKVSMATVSRVVNGNNNVRKETRDRVMEVIKRLHYQPNAVAQGLAS). The segment at residues 8–27 (IYDVAREAKVSMATVSRVVN) is a DNA-binding region (H-T-H motif).

Functionally, transcriptional regulator of the pepQ gene for prolidase. The chain is HTH-type transcriptional regulator pepR1 (pepR1) from Lactobacillus delbrueckii subsp. lactis.